Here is a 344-residue protein sequence, read N- to C-terminus: MKYLVLALDAMGGDFGPKVTVPASLEALSLHPKLKLLLVGDPDVIKPILDGFNVKYLRRLTLIPSKSVVNDNDRPAQAIRLSKNTSMRIALELIKSGHAQACVSAGNTGALMGLSKLVIKLINGIDRPALTALLPHQKQGKTVILDLGANILCNDSMLVQFAIMGSVLSEQIAGIVNPRVALLNIGSEETKGLDNIRCASKILHTIPSIHYIGYIEANDLLMGKTDVLVCDGFAGNITLKTMEGMMRLILSLLTTSEEKNKLYYFIRKIKMWMNKCVFKQFVQLNPDLYNGAYLVGLRSTVIKSHGGANKHAFTKAITQAMYAVERRIPEKIADRLNTMMLYKK.

The protein belongs to the PlsX family. As to quaternary structure, homodimer. Probably interacts with PlsY.

It is found in the cytoplasm. The enzyme catalyses a fatty acyl-[ACP] + phosphate = an acyl phosphate + holo-[ACP]. It participates in lipid metabolism; phospholipid metabolism. Its function is as follows. Catalyzes the reversible formation of acyl-phosphate (acyl-PO(4)) from acyl-[acyl-carrier-protein] (acyl-ACP). This enzyme utilizes acyl-ACP as fatty acyl donor, but not acyl-CoA. The chain is Phosphate acyltransferase from Blochmanniella floridana.